The following is a 265-amino-acid chain: Short-chain dehydrogenase/reductase phqE (265 aa).

Positions 23, 24, 26, 46, 47, 50, 76, 131, 203, and 205 each coordinate NADP(+). A helical membrane pass occupies residues 25–45 (GIGFAVCAAALGHGAIVTIVG).

Belongs to the short-chain dehydrogenases/reductases (SDR) family. NADP(+) is required as a cofactor.

Its subcellular location is the membrane. Its pathway is alkaloid biosynthesis. Its function is as follows. Short-chain dehydrogenase/reductase; part of the gene cluster that mediates the biosynthesis of paraherquamide, a fungal indole alkaloid that belongs to a family of natural products containing a characteristic bicyclo[2.2.2]diazaoctane core. The first steps in the biosynthesis of paraherquamide is the production of the beta-methyl-proline precursor from L-isoleucine. They require oxidation of a terminally hydroxylated L-isoleucine to the corresponding aldehyde by enzymes which have still to be identified. Spontaneous cyclization and dehydration would yield the 4-methyl pyrolline-5-carboxylic acid, which is then reduced by the pyrroline-5-carboxylate reductase phqD leading to the beta-methyl-proline precursor. The next step of paraherquamide biosynthesis involves coupling of beta-methyl-proline and L-tryptophan by the bimodular NRPS phqB, to produce a monooxopiperazine intermediate. The reductase (R) domain of phqB utilizes NADPH for hydride transfer to reduce the thioester bond of the T domain-tethered linear dipeptide to a hemithioaminal intermediate, which spontaneously cleaves the C-S bond to release the aldehyde product. This compound undergoes spontaneous cyclization and dehydration to give a dienamine which is reverse prenylated at C-2 by the reverse prenyltransferase phqJ. The other prenyltransferase present in the cluster, phqI may be a redundant gene in the pathway. During biosynthetic assembly, the key step to produce the polycyclic core is catalyzed by the bifunctional reductase and intramolecular [4+2] Diels-Alderase, phqE, resulting in formation of the [2.2.2] diazaoctane intermediate preparaherquamide. Following formation of preparaherquamide, an indole 2,3-epoxidation-initiated pinacol-like rearrangement is catalyzed by the phqK FAD-dependent monooxygenase. The prenyltransferase phqA, the cytochrome P450 monooxygenase phqL, and the FAD-linked oxidoreductase phqH (or the cytochrome P450 monooxygenase phqM), are proposed to be involved in the formation of the pyran ring. The FAD-dependent monooxygenase phqK is likely responsible for generation of the spiro-oxindole, and the N-methylation is likely mediated by the phqN methyltransferase leading to the isolable natural product paraherquamide F. However, the order of these biosynthetic steps has still to be determined. In late-stage paraherquamide biosynthesis, the third P450 monooxygenase, phqO, is probably responsible for the C-14 hydroxylation, transforming paraherquamide F to paraherquamide G, and paraherquamide E to the final product paraherquamide A. The expansion from the 6-membered ring pyran (in paraherquamides F and G) to the 7-membered dioxepin ring (in paraherquamides A and E) represents a poorly understood but intriguing process that probably involves the 2-oxoglutarate-dependent dioxygenase phqC. Finally, the remaining members of the paraherquamide cluster, including phqI as well as phqM (or phqH), do not have a clearly prescribed role and appear to be redundant. This Penicillium fellutanum protein is Short-chain dehydrogenase/reductase phqE.